A 456-amino-acid chain; its full sequence is MEMEEVIAEVLQKIVPTEEERAFVKELIGELEGIAREKAQELGLEVKPYFVGSLAKDTYLAGDHDVDLFLAFPLDTPLEEVRERGLELGKEIGKTLGEYEIAYAEHPYVRAKYRDVKVDLVPCYDVRDWKDVRTAVDRSILHTKWVNENLNGKNNEVRLLKRFLKGIKAYGSEIYVRGFSGYLSEILVIKYGSFVEVLEKADFILRQKVVDPAGWLKREPEIAMKTVRREVEEDKPLVVIDPVDPRRNVAANLSWEKYGRFYFKADEFLQRPSLEFFFPTGKTGGDYLAELRRKGTHLITLLFDVPEMVDDLLFPQLERSARGFEKALSREGFEVLGWNTGRYGAEKAFVMLELDRVERPRVKIHPGPEFFTERGRDFYRKNERVWLVGKRLYAEKRVKENIIDVVRELLEKNQVALGKNLRETVKGAEILVDYVPRPLENEAYLFLSREKEGLKH.

Residues S53 and K56 each contribute to the ATP site. S53 and K56 together coordinate CTP. Mg(2+)-binding residues include D65, D67, and D119. 3 residues coordinate ATP: H142, K161, and Y170. CTP contacts are provided by H142, K161, and Y170.

The protein belongs to the tRNA nucleotidyltransferase/poly(A) polymerase family. Archaeal CCA-adding enzyme subfamily. In terms of assembly, homodimer. Mg(2+) serves as cofactor.

The enzyme catalyses a tRNA precursor + 2 CTP + ATP = a tRNA with a 3' CCA end + 3 diphosphate. It catalyses the reaction a tRNA with a 3' CCA end + 2 CTP + ATP = a tRNA with a 3' CCACCA end + 3 diphosphate. Catalyzes the addition and repair of the essential 3'-terminal CCA sequence in tRNAs without using a nucleic acid template. Adds these three nucleotides in the order of C, C, and A to the tRNA nucleotide-73, using CTP and ATP as substrates and producing inorganic pyrophosphate. tRNA 3'-terminal CCA addition is required both for tRNA processing and repair. Also involved in tRNA surveillance by mediating tandem CCA addition to generate a CCACCA at the 3' terminus of unstable tRNAs. While stable tRNAs receive only 3'-terminal CCA, unstable tRNAs are marked with CCACCA and rapidly degraded. This Thermococcus kodakarensis (strain ATCC BAA-918 / JCM 12380 / KOD1) (Pyrococcus kodakaraensis (strain KOD1)) protein is CCA-adding enzyme.